An 847-amino-acid polypeptide reads, in one-letter code: MHLLGPWLLLLVLEYLAFCDSSKWAFEHPETLYAWEGACVWIPCTYRALDGDLESFILFHNPEYNKNTSKFDGTRLYESTKDGKVPSEQKRVQFLGDKKKNCTLSIHPVHVNDSGQLGLRMESKTEKWMERIHLNVSERPFPPHIQLPPEIQESQEVTLTCLLNFSCYGYPIQLQWLLEGVPMRQAAVTSTSLTIKSVFTRSELKFSPQWSHHGKIVTCQLQDADGKFLSNDTVQLNVKHTPKLEIKVTPSDAIVREGDSVTMTCEVSSSNPMYTTVSWLKDGTSLKKQNTLTLNLSEVTKDQSGKYYCQVSNDVGPERSAEVFLQVQYAPEPSTVQILHSPAVEGSEVEFLCMSLANPLPTNYTWYHNGKEMQGRTEEKVHIPKILPWHAGTYSCVAENILGTGQRGPGAELDVQYPPKKVTTVIQNPTPIREGDTVTLSCNYNSSNPSVTRYEWKAHGTWEEPSLGVLKIQNIGWDNTTIACAACNNWCSWASPVALNVQYAPRDVRVRKIKPLSEIHSGNSVSLQCDFSSSHPKEVQFFWEKNGRLLGKESQLNFDSISPEDAGSYSCWVNNSIGQTASKAWTLEVLYAPRRLRVSMSPGDQVMEGKSATLTCESDANPPVSHYTWFDWNNQSLPYHSQKLRLEPVKVQHSGAYWCQGTNSVGKGRSPLSTLNVYYSPETIGRRVAVGLGSCLAILILAICGLKLQRRWKRTQSQQGLQENSSGQSFFVRNKKVRRAPLSEGPHSLGCYNPMMEDGISYTTLRFPETNIPRTGDAETSEMQSPPPDCDDTVTYSVLHKRQMGDYENVIPDFSEDEGIHYSELIQFGVGERPQAQENVDYVILKH.

Positions 1 to 19 (MHLLGPWLLLLVLEYLAFC) are cleaved as a signal peptide. One can recognise an Ig-like V-type domain in the interval 20-138 (DSSKWAFEHP…MERIHLNVSE (119 aa)). Residues 20-687 (DSSKWAFEHP…YYSPETIGRR (668 aa)) lie on the Extracellular side of the membrane. 3 N-linked (GlcNAc...) asparagine glycosylation sites follow: Asn-67, Asn-101, and Asn-112. Position 120 (Arg-120) interacts with N-acetylneuraminate. 9 N-linked (GlcNAc...) asparagine glycosylation sites follow: Asn-135, Asn-164, Asn-231, Asn-295, Asn-363, Asn-428, Asn-445, Asn-448, and Asn-479. Ig-like C2-type domains are found at residues 143 to 235 (PHIQ…DTVQ), 242 to 324 (PKLE…AEVF), 331 to 416 (PEPS…LDVQ), 419 to 500 (PKKV…VALN), 505 to 582 (PRDV…QTAS), and 593 to 676 (PRRL…STLN). A disulfide bridge connects residues Cys-161 and Cys-219. Cystine bridges form between Cys-265–Cys-309 and Cys-353–Cys-396. Disulfide bonds link Cys-442–Cys-484 and Cys-529–Cys-571. N-linked (GlcNAc...) asparagine glycosylation is found at Asn-574 and Asn-634. The cysteines at positions 616 and 659 are disulfide-linked. The helical transmembrane segment at 688 to 708 (VAVGLGSCLAILILAICGLKL) threads the bilayer. Topologically, residues 709–847 (QRRWKRTQSQ…ENVDYVILKH (139 aa)) are cytoplasmic. A phosphoserine mark is found at Ser-725, Ser-726, and Ser-729. Short sequence motifs (ITIM motif) lie at residues 760-765 (ISYTTL) and 794-799 (VTYSVL). Tyr-762 is subject to Phosphotyrosine. Residues Tyr-807, Tyr-822, and Tyr-842 each carry the phosphotyrosine modification. 2 short sequence motifs (ITIM motif) span residues 820 to 825 (IHYSEL) and 840 to 845 (VDYVIL).

Belongs to the immunoglobulin superfamily. SIGLEC (sialic acid binding Ig-like lectin) family. As to quaternary structure, predominantly monomer of isoform CD22-beta. Also found as heterodimer of isoform CD22-beta and a shorter isoform. Interacts with PTPN6/SHP-1, LYN, SYK, PIK3R1/PIK3R2 and PLCG1 upon phosphorylation. Interacts with GRB2, INPP5D and SHC1 upon phosphorylation. May form a complex with INPP5D/SHIP, GRB2 and SHC1. In terms of processing, phosphorylation of Tyr-762, Tyr-807 and Tyr-822 are involved in binding to SYK, GRB2 and SYK, respectively. Phosphorylation of Tyr-842 is involved in binding to SYK, PLCG2 and PIK3R1/PIK3R2. Phosphorylated on tyrosine residues by LYN.

It localises to the cell membrane. Most highly expressed siglec (sialic acid-binding immunoglobulin-like lectin) on B-cells that plays a role in various aspects of B-cell biology including differentiation, antigen presentation, and trafficking to bone marrow. Binds to alpha 2,6-linked sialic acid residues of surface molecules such as CD22 itself, CD45 and IgM in a cis configuration. Can also bind to ligands on other cells as an adhesion molecule in a trans configuration. Acts as an inhibitory coreceptor on the surface of B-cells and inhibits B-cell receptor induced signaling, characterized by inhibition of the calcium mobilization and cellular activation. Mechanistically, the immunoreceptor tyrosine-based inhibitory motif domain is phosphorylated by the Src kinase LYN, which in turn leads to the recruitment of the protein tyrosine phosphatase 1/PTPN6, leading to the negative regulation of BCR signaling. If this negative signaling from is of sufficient strength, apoptosis of the B-cell can be induced. In Gorilla gorilla gorilla (Western lowland gorilla), this protein is B-cell receptor CD22.